Reading from the N-terminus, the 158-residue chain is 6,7-dimethyl-8-ribityllumazine synthase (158 aa).

Residues Phe-22, 57–59, and 84–86 contribute to the 5-amino-6-(D-ribitylamino)uracil site; these read AYE and TVI. A (2S)-2-hydroxy-3-oxobutyl phosphate-binding site is contributed by 89 to 90; it reads GT. The Proton donor role is filled by His-92. Phe-117 lines the 5-amino-6-(D-ribitylamino)uracil pocket. Arg-131 contacts (2S)-2-hydroxy-3-oxobutyl phosphate.

Belongs to the DMRL synthase family. In terms of assembly, forms an icosahedral capsid composed of 60 subunits, arranged as a dodecamer of pentamers.

The enzyme catalyses (2S)-2-hydroxy-3-oxobutyl phosphate + 5-amino-6-(D-ribitylamino)uracil = 6,7-dimethyl-8-(1-D-ribityl)lumazine + phosphate + 2 H2O + H(+). It functions in the pathway cofactor biosynthesis; riboflavin biosynthesis; riboflavin from 2-hydroxy-3-oxobutyl phosphate and 5-amino-6-(D-ribitylamino)uracil: step 1/2. Catalyzes the formation of 6,7-dimethyl-8-ribityllumazine by condensation of 5-amino-6-(D-ribitylamino)uracil with 3,4-dihydroxy-2-butanone 4-phosphate. This is the penultimate step in the biosynthesis of riboflavin. The chain is 6,7-dimethyl-8-ribityllumazine synthase from Pectobacterium atrosepticum (strain SCRI 1043 / ATCC BAA-672) (Erwinia carotovora subsp. atroseptica).